The sequence spans 422 residues: NADP-dependent malic enzyme (422 aa).

Tyr39 acts as the Proton donor in catalysis. Residue Lys94 is the Proton acceptor of the active site. Lys94 contacts substrate. The a divalent metal cation site is built by Glu136, Asp137, and Asp162. NADP(+) contacts are provided by residues 195–198 (AGAA), Asn286, and Asn318. Asn318 serves as a coordination point for substrate.

It belongs to the malic enzymes family. The cofactor is Mg(2+). Mn(2+) serves as cofactor.

The enzyme catalyses (S)-malate + NADP(+) = pyruvate + CO2 + NADPH. It carries out the reaction oxaloacetate + H(+) = pyruvate + CO2. This chain is NADP-dependent malic enzyme, found in Halomonas elongata (strain ATCC 33173 / DSM 2581 / NBRC 15536 / NCIMB 2198 / 1H9).